The sequence spans 330 residues: Stomatin-1 (330 aa).

Residues 1–19 (MQPSETVEMQEMAQPSGQQ) show a composition bias toward polar residues. Residues 1–27 (MQPSETVEMQEMAQPSGQQRDVEARVQ) form a disordered region. Residues 42–62 (MFCIAMSYVLIFLTFPVSVFM) form a helical membrane-spanning segment.

This sequence belongs to the band 7/mec-2 family.

The protein localises to the membrane. This is Stomatin-1 (sto-1) from Caenorhabditis elegans.